A 57-amino-acid chain; its full sequence is Potassium channel toxin alpha-KTx 8.5 (57 aa).

An N-terminal signal peptide occupies residues 1-28 (MSRLYAIILIALVLNVIMTIMPDSKVEA). Cystine bridges form between cysteine 31/cysteine 47, cysteine 34/cysteine 52, and cysteine 38/cysteine 54.

This sequence belongs to the short scorpion toxin superfamily. Potassium channel inhibitor family. Alpha-KTx 08 subfamily. In terms of tissue distribution, expressed by the venom gland.

It localises to the secreted. Selectively inhibits voltage-gated potassium channels Kv1.2/KCNA2 (IC(50)=183 nM). The protein is Potassium channel toxin alpha-KTx 8.5 of Odontobuthus doriae (Yellow Iranian scorpion).